We begin with the raw amino-acid sequence, 921 residues long: Probable serine/threonine-protein kinase DDB_G0275165 (921 aa).

The region spanning 23–277 (FDPLSIIGSG…SNILGLLEYI (255 aa)) is the Protein kinase domain. ATP contacts are provided by residues 29 to 37 (IGSGGFGKV) and Lys-50. Asp-147 serves as the catalytic Proton acceptor. Disordered regions lie at residues 289 to 453 (DYEP…SFPR), 465 to 492 (RGEEEPLVVSQKDQLEHDLEGGDDNEED), 530 to 571 (RPWN…SDSN), 583 to 653 (NPTP…PTTI), 671 to 698 (STATAQPKSRSNSNPPKPTVVISNSNNN), 737 to 813 (IQPL…SRSL), 833 to 858 (SSQQSNLVHQPSSSSSSTKQPPTSQF), and 877 to 921 (FEKS…KPKK). Composition is skewed to low complexity over residues 310–352 (NNNN…NNNN), 400–412 (SNINGGVNNNNSN), and 429–445 (NINGCVNNNNNNSNNNN). 2 stretches are compositionally biased toward low complexity: residues 539-550 (NNNNKNNNNNEK) and 583-638 (NPTP…SLSS). A compositionally biased stretch (polar residues) spans 643-653 (PQSTYKVPTTI). Composition is skewed to low complexity over residues 748-775 (TVAATTATTPTTATSTTIKSSPTTPTST), 842-857 (QPSSSSSSTKQPPTSQ), and 892-910 (TSSSLTSNSNSSIPAPSSP).

This sequence belongs to the protein kinase superfamily. TKL Ser/Thr protein kinase family.

It catalyses the reaction L-seryl-[protein] + ATP = O-phospho-L-seryl-[protein] + ADP + H(+). It carries out the reaction L-threonyl-[protein] + ATP = O-phospho-L-threonyl-[protein] + ADP + H(+). This Dictyostelium discoideum (Social amoeba) protein is Probable serine/threonine-protein kinase DDB_G0275165.